The following is a 31-amino-acid chain: Glucagon-3 (31 aa).

Belongs to the glucagon family.

Its subcellular location is the secreted. In terms of biological role, glucagon plays a key role in glucose metabolism and homeostasis. Regulates blood glucose by increasing gluconeogenesis and decreasing glycolysis. This chain is Glucagon-3, found in Huso dauricus (Kaluga sturgeon).